Here is a 258-residue protein sequence, read N- to C-terminus: Ribosomal RNA small subunit methyltransferase J (258 aa).

Residues 123-124 (ER) and Asp-177 contribute to the S-adenosyl-L-methionine site. Residues 232–258 (IDGPKPSHSLEGKSSRYDIYPKKALKA) form a disordered region. The span at 239 to 252 (HSLEGKSSRYDIYP) shows a compositional bias: basic and acidic residues.

It belongs to the methyltransferase superfamily. RsmJ family.

Its subcellular location is the cytoplasm. The enzyme catalyses guanosine(1516) in 16S rRNA + S-adenosyl-L-methionine = N(2)-methylguanosine(1516) in 16S rRNA + S-adenosyl-L-homocysteine + H(+). Specifically methylates the guanosine in position 1516 of 16S rRNA. The protein is Ribosomal RNA small subunit methyltransferase J of Pseudomonas putida (strain ATCC 47054 / DSM 6125 / CFBP 8728 / NCIMB 11950 / KT2440).